The sequence spans 303 residues: MALSFSAILHIIMMSAEFFTGITVNGFLIIVNCNELIKHRKLMPIQILLMCIGMSRFGLQMVLMVQSFFSVFFPLLYVKIIYGAAMMFLWMFFSSISLWFATCLSVFYCLKISGFTQSCFLWLKFRIPKLIPWLLLGSVLASVSIASVCIEVDYAKNVEEDALRNTTLKKSKTKIKKISEVLLVNLALIFPLAIFVMCTSMLLISLYKHTHRMQHGSHGFRNANTEAHINALKTVITFFCFFISYFAAFMTNMTFSLPYRSHQFFMLKDIMAAYPSGHSVIIILSNSKFQQSFRRILCLKKKL.

The Extracellular portion of the chain corresponds to 1-10 (MALSFSAILH). The helical transmembrane segment at 11–31 (IIMMSAEFFTGITVNGFLIIV) threads the bilayer. The Cytoplasmic portion of the chain corresponds to 32-56 (NCNELIKHRKLMPIQILLMCIGMSR). Residues 57–77 (FGLQMVLMVQSFFSVFFPLLY) form a helical membrane-spanning segment. The Extracellular portion of the chain corresponds to 78-79 (VK). The chain crosses the membrane as a helical span at residues 80 to 100 (IIYGAAMMFLWMFFSSISLWF). The Cytoplasmic segment spans residues 101–102 (AT). The chain crosses the membrane as a helical span at residues 103 to 123 (CLSVFYCLKISGFTQSCFLWL). At 124-129 (KFRIPK) the chain is on the extracellular side. A helical membrane pass occupies residues 130-150 (LIPWLLLGSVLASVSIASVCI). Topologically, residues 151-185 (EVDYAKNVEEDALRNTTLKKSKTKIKKISEVLLVN) are cytoplasmic. The helical transmembrane segment at 186–206 (LALIFPLAIFVMCTSMLLISL) threads the bilayer. Topologically, residues 207–234 (YKHTHRMQHGSHGFRNANTEAHINALKT) are extracellular. The helical transmembrane segment at 235-255 (VITFFCFFISYFAAFMTNMTF) threads the bilayer. Topologically, residues 256 to 277 (SLPYRSHQFFMLKDIMAAYPSG) are cytoplasmic.

This sequence belongs to the G-protein coupled receptor T2R family.

Its subcellular location is the cell membrane. Bitter taste receptor that detects natural and synthetic bitter compounds. This is Taste receptor type 2 member 2 from Homo sapiens (Human).